The sequence spans 281 residues: L-ornithine N(alpha)-acyltransferase (281 aa).

It belongs to the acetyltransferase family. OlsB subfamily.

It catalyses the reaction a (3R)-hydroxyacyl-[ACP] + L-ornithine = a lyso-ornithine lipid + holo-[ACP] + H(+). The protein operates within lipid metabolism. Catalyzes the first step in the biosynthesis of ornithine lipids, which are phosphorus-free membrane lipids. Catalyzes the 3-hydroxyacyl-acyl carrier protein-dependent acylation of ornithine to form lyso-ornithine lipid (LOL). This is L-ornithine N(alpha)-acyltransferase from Brucella abortus (strain 2308).